A 99-amino-acid polypeptide reads, in one-letter code: Prostate and testis expressed protein 4 (99 aa).

The N-terminal stretch at 1-23 (MNSVTKISTLLIVILSFLCFVEG) is a signal peptide. Residues 24-99 (LICNSCEKSR…CCEKNLCNSF (76 aa)) form the UPAR/Ly6 domain. Disulfide bonds link Cys26-Cys52, Cys29-Cys37, Cys44-Cys70, and Cys74-Cys90.

As to expression, expressed in prostate, testis, eye, kidney and skeletal muscle. Expressed in the dorsal lobe of prostate. Not expressed in the ventral lobe of prostate.

It localises to the secreted. In terms of biological role, enhances sperm motility. Binds to calmodulin and inhibits calcium transport into spermatozoa. May modulate the function of nicotinic acetylcholine receptors. The sequence is that of Prostate and testis expressed protein 4 (Pate4) from Mus musculus (Mouse).